The sequence spans 309 residues: Olfactory receptor 4B1 (309 aa).

Topologically, residues 1–23 are extracellular; it reads MASTSNVTELIFTGLFQDPAVQS. The N-linked (GlcNAc...) asparagine glycan is linked to N6. Residues 24-47 traverse the membrane as a helical segment; that stretch reads VCFVVFLPVYLATVVGNGLIVLTV. Residues 48–55 are Cytoplasmic-facing; that stretch reads SISKSLDS. The helical transmembrane segment at 56 to 77 threads the bilayer; the sequence is PMYFFLSCLSLVEISYSSTIAP. The Extracellular segment spans residues 78-98; the sequence is KFIIDLLAKIKTISLEGCLTQ. C95 and C187 are oxidised to a cystine. A helical membrane pass occupies residues 99–118; it reads IFFFHFFGVAEILLIVVMAY. Residues 119–137 are Cytoplasmic-facing; that stretch reads DCYVAICKPLHYMNIISRQ. The helical transmembrane segment at 138-156 threads the bilayer; the sequence is LCHLLVAGSWLGGFCHSII. At 157–193 the chain is on the extracellular side; it reads QILVIIQLPFCGPNVIDHYFCDLQPLFKLACTDTFME. The helical transmembrane segment at 194–217 threads the bilayer; that stretch reads GVIVLANSGLFSVFSFLILVSSYI. The Cytoplasmic segment spans residues 218 to 233; sequence VILVNLRNHSAEGRHK. A helical transmembrane segment spans residues 234–256; the sequence is ALSTCASHITVVILFFGPAIFLY. Over 257–267 the chain is Extracellular; sequence MRPSSTFTEDK. A helical transmembrane segment spans residues 268–287; the sequence is LVAVFYTVITPMLNPIIYTL. Topologically, residues 288-309 are cytoplasmic; sequence RNAEVKIAIRRLWSKKENPGRE.

Belongs to the G-protein coupled receptor 1 family.

It localises to the cell membrane. In terms of biological role, odorant receptor. In Homo sapiens (Human), this protein is Olfactory receptor 4B1 (OR4B1).